Reading from the N-terminus, the 341-residue chain is Endolytic peptidoglycan transglycosylase RlpA (341 aa).

An N-terminal signal peptide occupies residues 1 to 26; it reads MSKRVRSSLILPAVCGLGLAAVLLSS. Cysteine 27 carries N-palmitoyl cysteine lipidation. Cysteine 27 carries the S-diacylglycerol cysteine lipid modification. The region spanning 260-341 is the SPOR domain; it reads SLPADGLYLQ…LGQPTLVRPD (82 aa).

The protein belongs to the RlpA family.

It is found in the cell membrane. Lytic transglycosylase with a strong preference for naked glycan strands that lack stem peptides. Required for efficient separation of daughter cells and maintenance of rod shape. The sequence is that of Endolytic peptidoglycan transglycosylase RlpA from Pseudomonas aeruginosa (strain UCBPP-PA14).